Reading from the N-terminus, the 201-residue chain is FMN-dependent NADH:quinone oxidoreductase (201 aa).

FMN is bound by residues Ser9 and 16 to 18; that span reads SYS.

The protein belongs to the azoreductase type 1 family. In terms of assembly, homodimer. FMN serves as cofactor.

The enzyme catalyses 2 a quinone + NADH + H(+) = 2 a 1,4-benzosemiquinone + NAD(+). It carries out the reaction N,N-dimethyl-1,4-phenylenediamine + anthranilate + 2 NAD(+) = 2-(4-dimethylaminophenyl)diazenylbenzoate + 2 NADH + 2 H(+). Quinone reductase that provides resistance to thiol-specific stress caused by electrophilic quinones. In terms of biological role, also exhibits azoreductase activity. Catalyzes the reductive cleavage of the azo bond in aromatic azo compounds to the corresponding amines. The chain is FMN-dependent NADH:quinone oxidoreductase from Mesomycoplasma hyopneumoniae (strain 7448) (Mycoplasma hyopneumoniae).